A 502-amino-acid polypeptide reads, in one-letter code: MQVTMRGISKAFGPVKVLENVEFTLRGGEIHALMGENGAGKSTLMKILSGVHRADAGEILLDGRKAELRSTEAAEAAGIAIIHQELNLIPQLSVMENLFLGREPSRFGIIDYAAMRREARAQLEALGAGGIDPDAEAGSLSIGQQQMVEIAKALALNARVLIMDEPTAALTEREIDRLFELMAQLRENGAAIVYVSHRMEEIFRVCDRISVLRDGCFVGEREIARTDFDEVVRMMVGREIGDRYPKREAAPGEVRLKVENLADENMIAGIGFEVRAGEVLGIAGLMGSGRSDILKTLFGAKRRTAGRVELDGKELKVAAPGDAIAAGLGFVPEDRKSKGLVLGMSLRENATLVHLDQYARLGVVSAAEEKRAVDGLIAQLRIRARDAELDVKSLSGGNQQKVVFAKWLANPPKVLLLDEPTRGVDVGGKAEIYHIVNQLAAAGTAIVMVSSELPEVLALSNRILVLHEGRQAGIFDAAGCSQETLMAAATGGAVHSETRKQA.

ABC transporter domains are found at residues Val3 to Glu239 and Ala249 to Ala493. Gly35–Ser42 contacts ATP.

Belongs to the ABC transporter superfamily. Ribose importer (TC 3.A.1.2.1) family. In terms of assembly, the complex is composed of an ATP-binding protein (RbsA), two transmembrane proteins (RbsC) and a solute-binding protein (RbsB).

The protein resides in the cell inner membrane. The catalysed reaction is D-ribose(out) + ATP + H2O = D-ribose(in) + ADP + phosphate + H(+). In terms of biological role, part of the ABC transporter complex RbsABC involved in ribose import. Responsible for energy coupling to the transport system. The protein is Ribose import ATP-binding protein RbsA of Chromobacterium violaceum (strain ATCC 12472 / DSM 30191 / JCM 1249 / CCUG 213 / NBRC 12614 / NCIMB 9131 / NCTC 9757 / MK).